Reading from the N-terminus, the 1444-residue chain is DNA polymerase III PolC-type (1444 aa).

Residues 421–577 (YVVFDVETTG…ADAEATGYLL (157 aa)) enclose the Exonuclease domain.

The protein belongs to the DNA polymerase type-C family. PolC subfamily.

The protein resides in the cytoplasm. It carries out the reaction DNA(n) + a 2'-deoxyribonucleoside 5'-triphosphate = DNA(n+1) + diphosphate. Its function is as follows. Required for replicative DNA synthesis. This DNA polymerase also exhibits 3' to 5' exonuclease activity. The protein is DNA polymerase III PolC-type of Lacticaseibacillus paracasei (strain ATCC 334 / BCRC 17002 / CCUG 31169 / CIP 107868 / KCTC 3260 / NRRL B-441) (Lactobacillus paracasei).